The sequence spans 261 residues: GTP cyclohydrolase FolE2 (261 aa).

It belongs to the GTP cyclohydrolase IV family.

The enzyme catalyses GTP + H2O = 7,8-dihydroneopterin 3'-triphosphate + formate + H(+). It participates in cofactor biosynthesis; 7,8-dihydroneopterin triphosphate biosynthesis; 7,8-dihydroneopterin triphosphate from GTP: step 1/1. In terms of biological role, converts GTP to 7,8-dihydroneopterin triphosphate. This is GTP cyclohydrolase FolE2 from Geobacter metallireducens (strain ATCC 53774 / DSM 7210 / GS-15).